A 357-amino-acid polypeptide reads, in one-letter code: 3'-hydroxy-N-methyl-(S)-coclaurine 4'-O-methyltransferase 2 (357 aa).

Asp-226 lines the S-adenosyl-L-methionine pocket. His-264 serves as the catalytic Proton acceptor.

Belongs to the class I-like SAM-binding methyltransferase superfamily. Cation-independent O-methyltransferase family. COMT subfamily. In terms of assembly, homodimer. In terms of tissue distribution, expressed in roots, stems, leaves and flowers.

It carries out the reaction (S)-3'-hydroxy-N-methylcoclaurine + S-adenosyl-L-methionine = (S)-reticuline + S-adenosyl-L-homocysteine + H(+). It functions in the pathway alkaloid biosynthesis; (S)-reticuline biosynthesis; (S)-reticuline from (S)-norcoclaurine: step 4/4. Its function is as follows. Involved in the biosynthesis of benzylisoquinoline alkaloids. Catalyzes the transfer of the methyl group to the 4'-hydroxyl group of 3'-hydroxy-N-methylcoclaurine to form reticuline. Can also use laudanosoline and, with a lower activity, 6-O-methylnorlaudanosoline and norlaudanosoline as substrates. Also involved in the papaverine biosynthesis. The polypeptide is 3'-hydroxy-N-methyl-(S)-coclaurine 4'-O-methyltransferase 2 (Papaver somniferum (Opium poppy)).